Consider the following 579-residue polypeptide: uncharacterized protein (579 aa).

This is an uncharacterized protein from Klebsiella pneumoniae.